Consider the following 315-residue polypeptide: DNA-directed RNA polymerase subunit alpha (315 aa).

The segment at 1–228 (MLEIEKPKIE…EHLRLFIGLT (228 aa)) is alpha N-terminal domain (alpha-NTD). The segment at 246–315 (DKILEMTIEE…LGLSLRQEDE (70 aa)) is alpha C-terminal domain (alpha-CTD).

This sequence belongs to the RNA polymerase alpha chain family. In terms of assembly, homodimer. The RNAP catalytic core consists of 2 alpha, 1 beta, 1 beta' and 1 omega subunit. When a sigma factor is associated with the core the holoenzyme is formed, which can initiate transcription.

The catalysed reaction is RNA(n) + a ribonucleoside 5'-triphosphate = RNA(n+1) + diphosphate. Functionally, DNA-dependent RNA polymerase catalyzes the transcription of DNA into RNA using the four ribonucleoside triphosphates as substrates. The chain is DNA-directed RNA polymerase subunit alpha from Desulforamulus reducens (strain ATCC BAA-1160 / DSM 100696 / MI-1) (Desulfotomaculum reducens).